A 405-amino-acid chain; its full sequence is Tryptophan synthase beta chain (405 aa).

N6-(pyridoxal phosphate)lysine is present on Lys-96.

The protein belongs to the TrpB family. As to quaternary structure, tetramer of two alpha and two beta chains. Pyridoxal 5'-phosphate serves as cofactor.

The enzyme catalyses (1S,2R)-1-C-(indol-3-yl)glycerol 3-phosphate + L-serine = D-glyceraldehyde 3-phosphate + L-tryptophan + H2O. It participates in amino-acid biosynthesis; L-tryptophan biosynthesis; L-tryptophan from chorismate: step 5/5. Functionally, the beta subunit is responsible for the synthesis of L-tryptophan from indole and L-serine. The chain is Tryptophan synthase beta chain from Clostridium botulinum (strain Alaska E43 / Type E3).